A 527-amino-acid polypeptide reads, in one-letter code: Cytochrome P450 monooxygenase aba2 (527 aa).

The chain crosses the membrane as a helical span at residues threonine 26–phenylalanine 46. Asparagine 189, asparagine 420, and asparagine 448 each carry an N-linked (GlcNAc...) asparagine glycan. Cysteine 460 contributes to the heme binding site. An N-linked (GlcNAc...) asparagine glycan is attached at asparagine 464.

The protein belongs to the cytochrome P450 family. The cofactor is heme.

The protein resides in the membrane. The protein operates within hormone biosynthesis. Its function is as follows. Cytochrome P450 monooxygenase; part of the gene cluster that mediates the biosynthesis of abscisic acid (ABA), a phytohormone that acts antagonistically toward salicylic acid (SA), jasmonic acid (JA) and ethylene (ETH) signaling, to impede plant defense responses. The first step of the pathway catalyzes the reaction from farnesyl diphosphate to alpha-ionylideneethane performed by the alpha-ionylideneethane synthase aba3 via a three-step reaction mechanism involving 2 neutral intermediates, beta-farnesene and allofarnesene. The cytochrome P450 monooxygenase aba1 might then be involved in the conversion of alpha-ionylideneethane to alpha-ionylideneacetic acid. Alpha-ionylideneacetic acid is further converted to abscisic acid in 2 steps involving the cytochrome P450 monooxygenase aba2 and the short-chain dehydrogenase/reductase aba4, via the intermediates 1'-deoxy-ABA or 1',4'-trans-diol-ABA, depending on the order of action of these 2 enzymes. Aba2 is responsible for the hydroxylation of carbon atom C-1' and aba4 might be involved in the oxidation of the C-4' carbon atom. The chain is Cytochrome P450 monooxygenase aba2 (aba2) from Botryotinia fuckeliana (strain B05.10) (Noble rot fungus).